The following is a 248-amino-acid chain: Trypsin II-P29 (248 aa).

Positions 1–16 (MKFLFLILSCLGAAVA) are cleaved as a signal peptide. Positions 17-25 (FPGGADDDK) are cleaved as a propeptide — activation peptide. The 221-residue stretch at 26–246 (IVGGYTCPEH…YVDWIQETIA (221 aa)) folds into the Peptidase S1 domain. Cystine bridges form between C32–C162, C50–C66, C134–C235, C141–C208, C173–C187, and C198–C222. H65 serves as the catalytic Charge relay system. 4 residues coordinate Ca(2+): E77, N79, V82, and E87. Residue D109 is the Charge relay system of the active site. S202 acts as the Charge relay system in catalysis.

This sequence belongs to the peptidase S1 family. The cofactor is Ca(2+). High levels are seen in the pancreas while lower levels are found in the liver, spleen and thymus.

It is found in the secreted. It localises to the extracellular space. It carries out the reaction Preferential cleavage: Arg-|-Xaa, Lys-|-Xaa.. The sequence is that of Trypsin II-P29 from Gallus gallus (Chicken).